Consider the following 479-residue polypeptide: Transcription factor CP2-like protein 1 (479 aa).

The tract at residues 1-52 (MLFWHTQPEHYNQHNSGSYLRDVLALPIFKQEEPQLSPENGARLPPLQYVLC) is mediate transcriptional repression. The 238-residue stretch at 43–280 (RLPPLQYVLC…PSPSYNGSPN (238 aa)) folds into the Grh/CP2 DB domain. Disordered stretches follow at residues 219–248 (KPKG…YQPS) and 260–301 (WPDV…LPLG). Positions 221-245 (KGADRKQKTDREKMEKRTAQEKEKY) are enriched in basic and acidic residues. The tract at residues 261 to 365 (PDVPYQANNT…IRLFNAIKGR (105 aa)) is SAM2-like domain. Over residues 266–292 (QANNTPSPSYNGSPNSFGLREGNSSPN) the composition is skewed to polar residues.

Belongs to the grh/CP2 family. CP2 subfamily. Forms homohexamers via its SAM-like domain. Interacts with Mta1; which is indispensable for Tfcp2l1-mediated self-renewal-promoting effect and endoderm-inhibiting action. As to expression, highly expressed in placenta, testis, small intestine, kidney and stomach. Low levels of expression in lung, mesenteric lymph nodes, muscle, ovary, and thymus. No expression was detected in brain, heart, liver, and spleen. Expressed in eccrine glands in the palm. Expression is prominent in both kidney collecting ducts intercalated (IC) and principal (PC) cells. Also expressed in the thick limb of Henle and connecting segments of the nephron.

It is found in the nucleus. Functionally, transcription factor that facilitates establishment and maintenance of pluripotency in embryonic stem cells (ESCs). With Klf2, acts as the major effector of self-renewal that mediates induction of pluripotency downstream of LIF/Stat3 and Wnt/beta-catenin signaling. Required for normal duct development in the salivary gland and kidney. Coordinates the development of the kidney collecting ducts intercalated (IC) and principal (PC) cells, which regulate acid-base and salt-water homeostasis, respectively. Regulates the expression of IC genes including subunits B1 and D2 of the V-ATPase complex, Oxgr1, Ca12, Slc4a1, Aqp6 and IC-specific transcription factor Foxi1. Also regulates the expression of Jag1 and subsequent notch signaling in the collecting duct. Jag1 initiates notch signaling in PCs but inhibits notch signaling in ICs. Acts as a transcriptional suppressor that may suppress UBP1-mediated transcriptional activation. Modulates the placental expression of CYP11A1. The polypeptide is Transcription factor CP2-like protein 1 (Tfcp2l1) (Mus musculus (Mouse)).